The sequence spans 156 residues: Small ribosomal subunit protein uS7 (156 aa).

Belongs to the universal ribosomal protein uS7 family. In terms of assembly, part of the 30S ribosomal subunit. Contacts proteins S9 and S11.

Its function is as follows. One of the primary rRNA binding proteins, it binds directly to 16S rRNA where it nucleates assembly of the head domain of the 30S subunit. Is located at the subunit interface close to the decoding center, probably blocks exit of the E-site tRNA. This Clostridium botulinum (strain Alaska E43 / Type E3) protein is Small ribosomal subunit protein uS7.